Reading from the N-terminus, the 239-residue chain is Zinc finger protein 575 (239 aa).

The tract at residues 1 to 62 (MLGGSVKSEV…PQRPHRCPDC (62 aa)) is disordered. Over residues 22 to 31 (PETKAPHQDL) the composition is skewed to basic and acidic residues. Basic residues predominate over residues 46–57 (RPRRRPPPQRPH). 6 C2H2-type zinc fingers span residues 57-79 (HRCPDCPKAFSYPSKLATHRLAH), 85-107 (HPCPDCPKAFSYPSKLAAHRLTH), 113-135 (HSCPHCPKAFGHRSKLAAHLWTH), 141-163 (YPCPDCPKSFCYPSKLAAHRHTH), 171-193 (YPCPHCPKAFSFPSKLAAHRLCH), and 207-230 (HRCSSCNQAFGQRRLLLVHQRSHH).

Belongs to the krueppel C2H2-type zinc-finger protein family.

The protein localises to the nucleus. Its function is as follows. May be involved in transcriptional regulation. The protein is Zinc finger protein 575 (Znf575) of Mus musculus (Mouse).